A 354-amino-acid chain; its full sequence is Replication factor C subunit 5 (354 aa).

ATP contacts are provided by residues Val-5, Ser-17, 43–51 (GPNGTGKKT), and Arg-231.

The protein belongs to the activator 1 small subunits family. As to quaternary structure, replication factor C (RFC) is a heteropentamer of subunits RFC1, RFC2, RFC3, RFC4 and RFC5 and forms a complex with POL30/PCNA in the presence of ATP. Component of the RAD24-RFC complex which consists of RAD24, RFC2, RFC3, RFC4 and RFC5 and associates with the checkpoint clamp DDC1:MEC3:RAD17 complex. Component of the ELG1-RFC complex which consists of ELG1, RFC2, RFC3, RFC4 and RFC5. Component of the CTF18-RFC complex, which consists of CTF18, CTF8, DCC1, RFC2, RFC3, RFC4 and RFC5. RFC5 interacts with ECO1.

Its subcellular location is the nucleus. Its function is as follows. Component of ATP-dependent clamp loader (RFC and RFC-like) complexes for DNA clamps, such as the POL30/PCNA homotrimer and the checkpoint clamp DDC1:MEC3:RAD17 complex. During a clamp loading circle, the RFC:clamp complex binds to DNA and the recognition of the double-stranded/single-stranded junction stimulates ATP hydrolysis by RFC. The complex presumably provides bipartite ATP sites in which one subunit supplies a catalytic site for hydrolysis of ATP bound to the neighboring subunit. Dissociation of RFC from the clamp leaves the clamp encircling DNA. Component of the replication factor C (RFC or activator 1) complex which loads POL30/PCNA and acts during elongation of primed DNA templates by DNA polymerase delta and epsilon. RFC has an essential but redundant activity in sister chromatid cohesion establishment. Component of the RFC-like complex CTF18-RFC which is required for efficient establishment of chromosome cohesion during S-phase and may load or unload POL30/PCNA. Component of the RFC-like RAD24-RFC complex which loads the checkpoint clamp DDC1:MEC3:RAD17 complex and is involved in DNA repair pathways. Component of the RFC-like ELG1-RFC complex which appears to have a role in DNA replication, replication fork re-start, recombination and repair. The polypeptide is Replication factor C subunit 5 (RFC5) (Saccharomyces cerevisiae (strain ATCC 204508 / S288c) (Baker's yeast)).